The following is a 587-amino-acid chain: MSSCVSSQPTSDRAAPQDELGSGGVSRESQKPCEALRGLSSLSIHLGMESFIVVTECEPGRGVDLSLARDQPLEADGQELPLDASEPESRSLLSGGKMSLQERSQGGPASSSSLDMNGRCICPSLSYSPASSPQSSPRMPRRPTVESHHVSITGLQDCVQLNQYTLKDEIGKGSYGVVKLAYNENDNTYYAMKVLSKKKLIRQAGFPRRPPPRGTRPAPGGCIQPRGPIEQVYQEIAILKKLDHPNVVKLVEVLDDPNEDHLYMVFELVNQGPVMEVPTLKPLSEDQARFYFQDLIKGIEYLHYQKIIHRDIKPSNLLVGEDGHIKIADFGVSNEFKGSDALLSNTVGTPAFMAPESLSETRKIFSGKALDVWAMGVTLYCFVFGQCPFMDERIMCLHSKIKSQALEFPDQPDIAEDLKDLITRMLDKNPESRIVVPEIKLHPWVTRHGAEPLPSEDENCTLVEVTEEEVENSVKHIPSLATVILVKTMIRKRSFGNPFEGSRREERSLSAPGNLLTKKPTREWEPLSEPKEARQRRQPPGPRASPCGGGGSALVKGGPCVESCGAPAPGSPPRTPPQQPEEAMEPE.

Residues 1–11 (MSSCVSSQPTS) are compositionally biased toward polar residues. Disordered stretches follow at residues 1 to 32 (MSSC…SQKP) and 74 to 115 (EADG…SSLD). An N-acetylserine modification is found at Ser2. Phosphoserine is present on residues Ser99, Ser113, Ser128, Ser132, and Ser136. The segment covering 101 to 115 (QERSQGGPASSSSLD) has biased composition (polar residues). One can recognise a Protein kinase domain in the interval 164–445 (YTLKDEIGKG…VPEIKLHPWV (282 aa)). ATP is bound by residues 170 to 178 (IGKGSYGVV) and Lys193. The segment at 203–225 (QAGFPRRPPPRGTRPAPGGCIQP) is RP domain. Positions 204–224 (AGFPRRPPPRGTRPAPGGCIQ) are disordered. The Proton acceptor role is filled by Asp311. The interval 471 to 476 (ENSVKH) is autoinhibitory domain. Positions 474-499 (VKHIPSLATVILVKTMIRKRSFGNPF) are calmodulin-binding. 2 positions are modified to phosphoserine: Ser494 and Ser510. The segment at 496-587 (GNPFEGSRRE…QQPEEAMEPE (92 aa)) is disordered. Basic and acidic residues predominate over residues 520–535 (PTREWEPLSEPKEARQ). A compositionally biased stretch (pro residues) spans 569–579 (PGSPPRTPPQQ). Ser571 is modified (phosphoserine).

The protein belongs to the protein kinase superfamily. Ser/Thr protein kinase family. In terms of assembly, interacts with calmodulin. In terms of processing, phosphorylated by PKA. Each isoform may show a different pattern of phosphorylation. Autophosphorylated. In terms of tissue distribution, mainly expressed in brain, but detected in all tissues tested (at protein level). In the brain, isoform 1 may be predominant. with high levels in the cerebellum and hippocampus, although isoform 3 is detectable. Isoform 3 is also expressed in lung.

Its subcellular location is the nucleus. It is found in the cytoplasm. It localises to the cell projection. The protein localises to the neuron projection. It carries out the reaction L-seryl-[protein] + ATP = O-phospho-L-seryl-[protein] + ADP + H(+). The catalysed reaction is L-threonyl-[protein] + ATP = O-phospho-L-threonyl-[protein] + ADP + H(+). With respect to regulation, activated by Ca(2+)/calmodulin. Binding of calmodulin may relieve intrasteric autoinhibition. Autophosphorylation does not alter activity or regulation by Ca(2+)/calmodulin. In part, activity is independent on Ca(2+)/calmodulin. Functionally, calcium/calmodulin-dependent protein kinase belonging to a proposed calcium-triggered signaling cascade involved in a number of cellular processes. Phosphorylates CAMK1 and CAMK4. Phosphorylates CAMK1D. Seems to be involved in hippocampal activation of CREB1. Efficiently phosphorylates 5'-AMP-activated protein kinase (AMPK) trimer, including that consisting of PRKAA1, PRKAB1 and PRKAG1. This phosphorylation is stimulated in response to Ca(2+) signals. May play a role in neurite growth. Isoform 2 may promote neurite elongation, while isoform 1 may promoter neurite branching. The sequence is that of Calcium/calmodulin-dependent protein kinase kinase 2 (Camkk2) from Rattus norvegicus (Rat).